The following is a 165-amino-acid chain: Destrin (165 aa).

An N-acetylalanine modification is found at A2. An ADF-H domain is found at 4–153 (GVQVADEVCR…NRACIAEKLG (150 aa)). The short motif at 30 to 34 (KKRKK) is the Nuclear localization signal element.

Belongs to the actin-binding proteins ADF family.

Functionally, actin-depolymerizing protein. Severs actin filaments (F-actin) and binds to actin monomers (G-actin). Acts in a pH-independent manner. The protein is Destrin (DSTN) of Gallus gallus (Chicken).